Consider the following 144-residue polypeptide: Neuritin-A (144 aa).

The signal sequence occupies residues 1–27 (MGLKLSGRYIFLVLAVHLAYLLQAVKA). Serine 114 is lipidated: GPI-anchor amidated serine. The propeptide at 115–144 (AGAPGQRLLFPAFLPLLMVFLSTLFILVLQ) is removed in mature form.

Belongs to the neuritin family. Expressed in sensory regions of the brain including the visual, auditory and olfactory systems. Within the retina, only expressed in the retinal ganglion cells. Concentrated in axon tracts including retinal axons.

It is found in the cell membrane. Its function is as follows. Modulates postsynaptic dendritic arbor elaboration and synaptic maturation. This chain is Neuritin-A (nrn1-a), found in Xenopus laevis (African clawed frog).